Here is a 76-residue protein sequence, read N- to C-terminus: MDGDIENQVELEEKTRLINQVLELQNTLEDLSARVDAVKEENLKLKSENQVLGQYIENLMSASSVFQTTDSKSKRK.

Residues 6–52 are a coiled coil; the sequence is ENQVELEEKTRLINQVLELQNTLEDLSARVDAVKEENLKLKSENQVL.

Belongs to the SCOC family.

The protein localises to the golgi apparatus membrane. The protein resides in the golgi apparatus. It localises to the trans-Golgi network. Its subcellular location is the cytoplasm. It is found in the cytosol. Its function is as follows. Positive regulator of amino acid starvation-induced autophagy. The sequence is that of Short coiled-coil protein B (scocb) from Danio rerio (Zebrafish).